A 709-amino-acid polypeptide reads, in one-letter code: Elongation factor G (709 aa).

Positions 6–295 (KFLRNIGIMA…AVCTYLPSPL (290 aa)) constitute a tr-type G domain. GTP contacts are provided by residues 15–22 (AHIDAGKT), 92–96 (DTPGH), and 146–149 (NKMD).

It belongs to the TRAFAC class translation factor GTPase superfamily. Classic translation factor GTPase family. EF-G/EF-2 subfamily.

It localises to the cytoplasm. Catalyzes the GTP-dependent ribosomal translocation step during translation elongation. During this step, the ribosome changes from the pre-translocational (PRE) to the post-translocational (POST) state as the newly formed A-site-bound peptidyl-tRNA and P-site-bound deacylated tRNA move to the P and E sites, respectively. Catalyzes the coordinated movement of the two tRNA molecules, the mRNA and conformational changes in the ribosome. This chain is Elongation factor G, found in Amoebophilus asiaticus (strain 5a2).